We begin with the raw amino-acid sequence, 100 residues long: Urease subunit gamma (100 aa).

It belongs to the urease gamma subunit family. As to quaternary structure, heterotrimer of UreA (gamma), UreB (beta) and UreC (alpha) subunits. Three heterotrimers associate to form the active enzyme.

It is found in the cytoplasm. The catalysed reaction is urea + 2 H2O + H(+) = hydrogencarbonate + 2 NH4(+). It functions in the pathway nitrogen metabolism; urea degradation; CO(2) and NH(3) from urea (urease route): step 1/1. The protein is Urease subunit gamma of Mycobacterium bovis (strain ATCC BAA-935 / AF2122/97).